The primary structure comprises 368 residues: Peptide chain release factor 2 (368 aa).

Gln-250 bears the N5-methylglutamine mark.

Belongs to the prokaryotic/mitochondrial release factor family. Post-translationally, methylated by PrmC. Methylation increases the termination efficiency of RF2.

Its subcellular location is the cytoplasm. Functionally, peptide chain release factor 2 directs the termination of translation in response to the peptide chain termination codons UGA and UAA. This is Peptide chain release factor 2 from Rickettsia bellii (strain RML369-C).